The primary structure comprises 116 residues: Glycine-rich protein 3 short isoform (116 aa).

Residues 1–24 form the signal peptide; the sequence is MASKTLLLLGLFAFLFIVSEMAAA. The tract at residues 27–83 is disordered; the sequence is VKSESEETVKPEQHGGGFGDNGGGRYQGGGGHGGHGGGGYQGGGGRYQGGGGRQGGG. Residues 29–39 are compositionally biased toward basic and acidic residues; sequence SESEETVKPEQ. Residues 40-83 show a composition bias toward gly residues; the sequence is HGGGFGDNGGGRYQGGGGHGGHGGGGYQGGGGRYQGGGGRQGGG. Tandem repeats lie at residues 54–59, 62–67, 68–73, 75–80, and 81–86. Positions 54 to 86 are 5 X 6 AA tandem repeats of G-G-G-G-[HYRS]-[GYQ]; sequence GGGGHGGHGGGGYQGGGGRYQGGGGRQGGGGSY.

The protein belongs to the GRP family. In terms of assembly, interacts with WAK1 (via the extracellular domain). Component of a 500 kDa complex, composed of GRP3 or GRP3-S, WAK1 and KAPP.

It localises to the secreted. It is found in the extracellular space. Its subcellular location is the extracellular matrix. Regulates the function of the receptor protein kinase WAK1. The chain is Glycine-rich protein 3 short isoform (GRP3S) from Arabidopsis thaliana (Mouse-ear cress).